The primary structure comprises 989 residues: Phosphoenolpyruvate carboxylase (989 aa).

Active-site residues include His-175 and Lys-630.

This sequence belongs to the PEPCase type 1 family. The cofactor is Mg(2+).

The catalysed reaction is oxaloacetate + phosphate = phosphoenolpyruvate + hydrogencarbonate. Forms oxaloacetate, a four-carbon dicarboxylic acid source for the tricarboxylic acid cycle. This Prochlorococcus marinus (strain MIT 9515) protein is Phosphoenolpyruvate carboxylase.